The sequence spans 64 residues: Bacteriocin plantaricin ASM1 (64 aa).

Residues 1–21 form the signal peptide; sequence MSKLVKTLTVDEISKIQTNGG. Residues 61–64 constitute a cross-link (lanthionine (Ser-Cys)); the sequence is SYHC.

In terms of processing, contains 2 disulfide bonds.

It is found in the secreted. Its function is as follows. Bacteriocin with a narrow antibacterial spectrum. Antibacterial activity against the Gram-positive bacteria L.plantarun, L.pentosus, L.curvatus, L.lindneri, L.mesenteroides and E.faecilis. Lacks antibacterial activity against the Gram-positive bacteria L.brevis, L.sakei, L.lactis, P.acidilactici, B.subtilis, B.cereus, L.monocytogenes and S.aureus, and against the Gram-negative bacteria E.coli and S.typhimurium. The polypeptide is Bacteriocin plantaricin ASM1 (Lactiplantibacillus plantarum (Lactobacillus plantarum)).